A 309-amino-acid chain; its full sequence is NAD-dependent protein deacylase sirtuin-5, mitochondrial (309 aa).

A mitochondrion-targeting transit peptide spans 1 to 35 (MILLPFHTRRLVSHVYCGLKPASKKKGIALEMARP). The 271-residue stretch at 36–306 (SSNLADFREA…PPAIARHETE (271 aa)) folds into the Deacetylase sirtuin-type domain. 57–76 (GAGVSAESGVPTFRGAGGYW) contributes to the NAD(+) binding site. Substrate is bound by residues Tyr-101 and Arg-104. 139-142 (QNID) contacts NAD(+). The active-site Proton acceptor is His-157. Positions 165, 168, 206, and 211 each coordinate Zn(2+). NAD(+) contacts are provided by residues 248 to 250 (GTS), 274 to 276 (NME), and Cys-292.

This sequence belongs to the sirtuin family. Class III subfamily. The cofactor is Zn(2+).

It is found in the mitochondrion. The protein resides in the cytoplasm. It localises to the cytosol. Its subcellular location is the nucleus. The enzyme catalyses N(6)-malonyl-L-lysyl-[protein] + NAD(+) + H2O = 2''-O-malonyl-ADP-D-ribose + nicotinamide + L-lysyl-[protein]. It catalyses the reaction N(6)-succinyl-L-lysyl-[protein] + NAD(+) + H2O = 2''-O-succinyl-ADP-D-ribose + nicotinamide + L-lysyl-[protein]. It carries out the reaction N(6)-glutaryl-L-lysyl-[protein] + NAD(+) + H2O = 2''-O-glutaryl-ADP-D-ribose + nicotinamide + L-lysyl-[protein]. In terms of biological role, NAD-dependent lysine demalonylase, desuccinylase and deglutarylase that specifically removes malonyl, succinyl and glutaryl groups on target proteins. Has weak NAD-dependent protein deacetylase activity; however this activity may not be physiologically relevant in vivo. The sequence is that of NAD-dependent protein deacylase sirtuin-5, mitochondrial (sirt5) from Xenopus tropicalis (Western clawed frog).